The following is a 1153-amino-acid chain: Otoancorin (1153 aa).

The signal sequence occupies residues 1-22; that stretch reads MSQEPTTYSLFLFLFLSHGVSS. Asn-156 carries N-linked (GlcNAc...) asparagine glycosylation. The N-linked (GlcNAc...) (complex) asparagine glycan is linked to Asn-211. N-linked (GlcNAc...) asparagine glycosylation is found at Asn-244, Asn-289, Asn-321, Asn-394, Asn-398, Asn-460, Asn-544, Asn-812, Asn-911, and Asn-974. Residues 1109–1128 are disordered; the sequence is HSWQDAPASAGPTRTSSSRS. A lipid anchor (GPI-anchor amidated alanine) is attached at Ala-1130. A propeptide spans 1131 to 1153 (removed in mature form); that stretch reads GALQSWGLWLGCPLLVLMAKLLW.

Belongs to the stereocilin family.

Its subcellular location is the apical cell membrane. It localises to the secreted. The protein localises to the extracellular space. The protein resides in the extracellular matrix. In terms of biological role, may act as an adhesion molecule. This is Otoancorin (OTOA) from Homo sapiens (Human).